Reading from the N-terminus, the 132-residue chain is Dehydratase CTB10 (132 aa).

The 97-residue stretch at 21 to 117 (PDQSEEDHHN…IPDHFNFADM (97 aa)) folds into the EthD domain.

The protein belongs to the tpcK family.

The protein operates within mycotoxin biosynthesis. Functionally, dehydratase; part of the gene cluster that mediates the biosynthesis of cercosporin, a light-activated, non-host-selective toxin. The perylenequinone chromophore of cercosporin absorbs light energy to attain an electronically-activated triplet state and produces active oxygen species such as the hydroxyl radical, superoxide, hydrogen peroxide or singlet oxygen upon reaction with oxygen molecules. These reactive oxygen species cause damage to various cellular components including lipids, proteins and nucleic acids. The first step of cercosporin biosynthesis is performed by the polyketide synthase CTB1 which catalyzes the formation of nor-toralactone. The starter unit acyltransferase (SAT) domain of CTB1 initiates polyketide extension by the selective utilization of acetyl-CoA, which is elongated to the heptaketide in the beta-ketoacyl synthase (KS) domain by successive condensations with six malonyl units introduced by the malonyl acyltransferase (MAT) domain. The product template (PT) domain catalyzes C4-C9 and C2-C11 aldol cyclizations and dehydrations to a trihydroxynaphthalene, which is thought to be delivered to the thioesterase (TE) domain for product release. The bifunctional enzyme CTB3 then methylates nor-toralactone to toralactone before conducting an unusual oxidative aromatic ring opening. The O-methyltransferase CTB2 further methylates the nascent OH-6 of the CBT3 product, blocking further oxidation at this site before the reductase CTB6 reduces the 2-oxopropyl ketone at position C7, giving naphthalene. The FAD-dependent monooxygenase CTB5 in concert with the multicopper oxidase CTB12 are responsible for homodimerization of naphthalene with CTB7 installing the dioxepine moiety, finally producing cercosporin. The fasciclin domain-containing protein CTB11 might act with CTB5 and CTB12 whereas the roles of CTB9 and CTB10 have still to be elucidated. The chain is Dehydratase CTB10 from Cercospora beticola (Sugarbeet leaf spot fungus).